Consider the following 515-residue polypeptide: Adenine DNA glycosylase (515 aa).

A compositionally biased stretch (basic residues) spans 1–24 (MKKLQASVRSHKKQPANHKRRRTR). The tract at residues 1–38 (MKKLQASVRSHKKQPANHKRRRTRALSSSQAKPSSLDG) is disordered. Residue E105 is the Proton donor/acceptor of the active site. C261, C268, C271, and C277 together coordinate [4Fe-4S] cluster. Residues 335-466 (PREEYSATCV…AMKKVFRMYE (132 aa)) form the Nudix hydrolase domain. A Nudix box motif is present at residues 376–398 (VTLEPSEQHQHKALLQELQRWCG). The interval 468–494 (HRQGTRKGSKRSQVCPPSSRKKPSLGQ) is disordered.

Belongs to the Nth/MutY family. [4Fe-4S] cluster serves as cofactor. In terms of tissue distribution, expressed in heart, lung, liver, intestine, brain and thymus.

It is found in the nucleus. The protein localises to the mitochondrion. The catalysed reaction is Hydrolyzes free adenine bases from 7,8-dihydro-8-oxoguanine:adenine mismatched double-stranded DNA, leaving an apurinic site.. In terms of biological role, involved in oxidative DNA damage repair. Initiates repair of A*oxoG to C*G by removing the inappropriately paired adenine base from the DNA backbone. Possesses both adenine and 2-OH-A DNA glycosylase activities. The protein is Adenine DNA glycosylase (Mutyh) of Mus musculus (Mouse).